The sequence spans 117 residues: Ribosome-binding factor A (117 aa).

This sequence belongs to the RbfA family. Monomer. Binds 30S ribosomal subunits, but not 50S ribosomal subunits or 70S ribosomes.

It is found in the cytoplasm. Functionally, one of several proteins that assist in the late maturation steps of the functional core of the 30S ribosomal subunit. Associates with free 30S ribosomal subunits (but not with 30S subunits that are part of 70S ribosomes or polysomes). Required for efficient processing of 16S rRNA. May interact with the 5'-terminal helix region of 16S rRNA. In Lactiplantibacillus plantarum (strain ATCC BAA-793 / NCIMB 8826 / WCFS1) (Lactobacillus plantarum), this protein is Ribosome-binding factor A.